The sequence spans 208 residues: Probable DNA-3-methyladenine glycosylase (208 aa).

This sequence belongs to the DNA glycosylase MPG family.

The protein localises to the nucleus. The enzyme catalyses Hydrolysis of alkylated DNA, releasing 3-methyladenine, 3-methylguanine, 7-methylguanine and 7-methyladenine.. In terms of biological role, hydrolysis of the deoxyribose N-glycosidic bond to excise 3-methyladenine, and 7-methylguanine from the damaged DNA polymer formed by alkylation lesions. This chain is Probable DNA-3-methyladenine glycosylase, found in Encephalitozoon cuniculi (strain GB-M1) (Microsporidian parasite).